A 585-amino-acid chain; its full sequence is Cytochrome P450 monooxygenase AOL_s00215g278 (585 aa).

Position 518 (cysteine 518) interacts with heme.

Belongs to the cytochrome P450 family. Heme serves as cofactor.

The protein operates within secondary metabolite biosynthesis; terpenoid biosynthesis. In terms of biological role, cytochrome P450 monooxygenase; part of the gene cluster that mediates the biosynthesis of sesquiterpenyl epoxy-cyclohexenoids (SECs) such as anthrobotrisins and arthrosporols, metabolites that possess a novel hybrid carbon skeleton consisting of a polyketide-derived epoxycyclohexenol combined with a terpenoid-derived monocyclic sesquiterpenol substructure (PKS-PTS hybrid). The SEC pathway plays an important role for fungal soil colonization via decreasing fungal nematode-capturing ability. Within the pathway, the cytochrome P450 monooxygenase AOL_s00215g278 plays a role in the oxygenation of the phenol moiety, most likely in the epoxy formation. The pathway begins with the biosynthesis of 6-methylsalicylic acid (6-MSA), the first precursor of the polyketide-derived epoxycyclohexenol in arthrosporols, by the polyketide synthase (PKS) AOL_s00215g283 via condensation of 1 acetate and 3 malonate units. The 6-methylsalicylic acid decarboxylase AOL_s00215g281 then catalyzes the decarboxylation of 6-methylsalicylic acid to yield m-cresol. The cytochrome P450 monooxygenase AOL_s00215g282 further oxidizes m-cresol to yield toluquinol. With the assistance of the oxidoreductase AOL_s00215g277, the polyprenyl transferase AOL_s00215g276 catalyzes the farnesylation of toluquinol to produce farnesyl hydroquinone, the hybrid precursor for biosynthesis of SECs. Farnesyl hydroquinone undergoes epoxidation and then subsequent dehydrogenation to form farnesyl epoxy-quinone, the first and simplest SEC. The cytochrome P450 monooxygenase AOL_s00215g278 and the FAD-dependent monooxygenase AOL_s00215g279 might be involved in the oxygenation of the phenol moiety, most likely in the epoxy formation. The cytochrome P450 monooxygenases AOL_s00215g274 and AOL_s00215g280 are involved in specific regional ketone reductions at respectively C-4 and C-1 of farnesyl epoxy-quinone PubMed:33823587. This chain is Cytochrome P450 monooxygenase AOL_s00215g278, found in Arthrobotrys oligospora (strain ATCC 24927 / CBS 115.81 / DSM 1491) (Nematode-trapping fungus).